Here is a 98-residue protein sequence, read N- to C-terminus: NADH-ubiquinone oxidoreductase chain 4L (98 aa).

The next 3 membrane-spanning stretches (helical) occupy residues 1-21 (MTTMFLNLLLAFTVALVGVFI), 29-49 (TLLCLEGMMLSIFIMVALILL), and 59-79 (LPLILLVFSACEAGVGLALLV).

This sequence belongs to the complex I subunit 4L family. In terms of assembly, core subunit of respiratory chain NADH dehydrogenase (Complex I) which is composed of 45 different subunits.

Its subcellular location is the mitochondrion inner membrane. The enzyme catalyses a ubiquinone + NADH + 5 H(+)(in) = a ubiquinol + NAD(+) + 4 H(+)(out). Its function is as follows. Core subunit of the mitochondrial membrane respiratory chain NADH dehydrogenase (Complex I) which catalyzes electron transfer from NADH through the respiratory chain, using ubiquinone as an electron acceptor. Part of the enzyme membrane arm which is embedded in the lipid bilayer and involved in proton translocation. The sequence is that of NADH-ubiquinone oxidoreductase chain 4L (MT-ND4L) from Ornithorhynchus anatinus (Duckbill platypus).